Reading from the N-terminus, the 203-residue chain is Small ribosomal subunit protein uS4 (203 aa).

One can recognise an S4 RNA-binding domain in the interval 93–153 (RRFDNVVFRA…QKSQNLDAVA (61 aa)).

The protein belongs to the universal ribosomal protein uS4 family. In terms of assembly, part of the 30S ribosomal subunit. Contacts protein S5. The interaction surface between S4 and S5 is involved in control of translational fidelity.

Its function is as follows. One of the primary rRNA binding proteins, it binds directly to 16S rRNA where it nucleates assembly of the body of the 30S subunit. In terms of biological role, with S5 and S12 plays an important role in translational accuracy. The chain is Small ribosomal subunit protein uS4 from Chlorobium phaeobacteroides (strain BS1).